The sequence spans 143 residues: Large ribosomal subunit protein uL13 (143 aa).

Belongs to the universal ribosomal protein uL13 family. In terms of assembly, part of the 50S ribosomal subunit.

This protein is one of the early assembly proteins of the 50S ribosomal subunit, although it is not seen to bind rRNA by itself. It is important during the early stages of 50S assembly. This is Large ribosomal subunit protein uL13 from Geobacter sulfurreducens (strain ATCC 51573 / DSM 12127 / PCA).